A 1218-amino-acid polypeptide reads, in one-letter code: MRSPRGGAAAQPSGRRGDTTAAAAGDLVTTQVSLGGFDAGVAAGDLADFLEHEVGLVWRCRVKTSWTPPDSYPDFALPTAPASASAAAAPPRYDRVPPHAFVHFARPEGARRAADLAGETRLILRGKPLRVASAPDSSLRVSRRSSIAPFRFPDVRLEVGALPSPGAFLAAWRGPDAGLDLSVDPFDGCCRLVFTRDTAFTFPGFREVAAIRCDVKLEFPVRDVLEVRLYRLDCSLLLRLAAAPLVHYRTADDDFHEPVPFDLLDDDDPWIRTTDITPSGAIGRCGVYRISFSARFWPKMDRALDYMRERRVAIVDCGGGWGPRRGLTVRDELEFGEPMQDVFFCLQHAEGLKFPLLFMVNALVHKGIINQHQLTPEFFSLLGRSEENVNVAALRDFWGDKFPVFDACGRLKKALNRVARNPKLLCSKVGDDHAEVRRLVITPTRAYCLPPEVERSNRVLRHYHEVADRFLRVTFMDEGMQVLNNNVLNSFTAPIVKDLMSNFFQQKTTVYKRVRMLLTEGFHMCGRKYSFLAFSSNQLRDKSAWFFAEDRKTTVEAIRKWMGRFTSKNVAKHAARMGQCFSSTYATVTMRPDEVDESFDDVVHNEYIFSDGIGKITPDLALEVAERLQLTDNPPSAYQIRFAGFKGVIAVWQGHGDGTRLFLRPSMRKFESNHLVLEVVSWTKFQPGFLNRQIIILLSSLNVPDSIFWQMQETMLSNLNNILSDRDVAFEVLTTSCADDGNTAALMLSAGFEPRTEPHLKAMLLAIRSAQLQDLLEKARIFVPKGRWLMGCLDELGVLEQGQCFIRATVPSLNSYFVKHGSRFSSTDKNTEVILGTVVIAKNPCLHPGDVRILEAVDVPELHHLVDCLVFPQKGERPHANEASGSDLDGDLYFVTWDEKLIPPGKKSWNPMDYSPPEAKQLPRQVSQHDIIDFFLKNMISENLGRICNAHVVHADLSEYGAMDEKCIHLAELAATAVDFPKTGKLAIMPPHLKPKVYPDFMGKEDGQSYKSEKILGRLYRSIQEASNGDVVSQEVCTPNDLPYDIDLEVPGASDFLASAWQCKCSYDAQLSALLSQYRVRTEAELVTGHITFLVKNSSKKQGDIKDRLKTAYSALRKEFKSTFESIASDQCEIGDDEKNLLYEMKASAWYQVTYHPKWVEKSRGILGPDGEEIPASLSFAWIPVDYLARIKLRCHGKVRVEGQKPVERLAAYISERI.

It belongs to the RdRP family.

It carries out the reaction RNA(n) + a ribonucleoside 5'-triphosphate = RNA(n+1) + diphosphate. Functionally, involved in the RNA silencing pathway. Probably required for the generation of small interfering RNAs (siRNAs). Regulates shoot apical meristem (SAM) initiation and maintenance and leaf polarization through the trans-acting siRNAS (ta-siRNAs) pathway which probably modulates the expression of the ARF2, ARF3, ARF4, ARF14 and ARF15 genes. The polypeptide is Probable RNA-dependent RNA polymerase SHL2 (SHL2) (Oryza sativa subsp. japonica (Rice)).